Here is a 263-residue protein sequence, read N- to C-terminus: Shikimate dehydrogenase (NADP(+)) (263 aa).

Residues 21–23 and threonine 67 contribute to the shikimate site; that span reads TLS. The active-site Proton acceptor is lysine 71. Glutamate 83 is an NADP(+) binding site. Positions 92 and 103 each coordinate shikimate. NADP(+) contacts are provided by residues 126 to 130 and leucine 204; that span reads GAGGA. Residue tyrosine 206 coordinates shikimate. NADP(+) is bound at residue glycine 227.

This sequence belongs to the shikimate dehydrogenase family. As to quaternary structure, homodimer.

It catalyses the reaction shikimate + NADP(+) = 3-dehydroshikimate + NADPH + H(+). It participates in metabolic intermediate biosynthesis; chorismate biosynthesis; chorismate from D-erythrose 4-phosphate and phosphoenolpyruvate: step 4/7. Involved in the biosynthesis of the chorismate, which leads to the biosynthesis of aromatic amino acids. Catalyzes the reversible NADPH linked reduction of 3-dehydroshikimate (DHSA) to yield shikimate (SA). The sequence is that of Shikimate dehydrogenase (NADP(+)) from Sulfolobus acidocaldarius (strain ATCC 33909 / DSM 639 / JCM 8929 / NBRC 15157 / NCIMB 11770).